A 245-amino-acid polypeptide reads, in one-letter code: MKFDILTLFPAMFDGPLTESIIRRAVERGFVDISLHNIRDYATDRHRVVDDAPYGGGDGMVMKVEPLAACIEAVKAERPAARVILTTPRGRRFDHDAARELAGYEELIIVCGRYEGIDERVRDLFVDDEFSIGDFVLTGGELAAMVMIDAVIRFIPGVLGSPGSAEYDSFADGLLEYPQYTRPVEFRGVQVPGVLLSGNHAEISRWRRQKALELTRRVRPDLLHKAELSSSDRDCLAMLEREGEP.

Residues G112 and 132 to 137 (IGDFVL) contribute to the S-adenosyl-L-methionine site.

This sequence belongs to the RNA methyltransferase TrmD family. As to quaternary structure, homodimer.

It is found in the cytoplasm. The catalysed reaction is guanosine(37) in tRNA + S-adenosyl-L-methionine = N(1)-methylguanosine(37) in tRNA + S-adenosyl-L-homocysteine + H(+). Its function is as follows. Specifically methylates guanosine-37 in various tRNAs. The polypeptide is tRNA (guanine-N(1)-)-methyltransferase (Geobacter sulfurreducens (strain ATCC 51573 / DSM 12127 / PCA)).